We begin with the raw amino-acid sequence, 154 residues long: MVLKVKMGDIGVAKSPESIETLLGSCVAIILYDRGKKIGGVAHVMLPKSRNSSEKNPGKYANTAIPELINRMAKLGARKDKLTTKLAGGAAMFKCNSNTIDVGKKNIEASREEVKKMGLRIASEDLGGDTGRTITLSLKDGSVLVRTGSELKTI.

This sequence belongs to the CheD family.

It catalyses the reaction L-glutaminyl-[protein] + H2O = L-glutamyl-[protein] + NH4(+). In terms of biological role, probably deamidates glutamine residues to glutamate on methyl-accepting chemotaxis receptors (MCPs), playing an important role in chemotaxis. This chain is Probable chemoreceptor glutamine deamidase CheD, found in Methanococcus maripaludis (strain DSM 14266 / JCM 13030 / NBRC 101832 / S2 / LL).